Consider the following 501-residue polypeptide: Putative antiporter subunit mnhD2 (501 aa).

14 consecutive transmembrane segments (helical) span residues S4–I24, I33–V53, L79–F99, Y109–A129, L131–L151, I162–L182, I207–F227, F245–F265, P274–Y294, I309–F329, D334–L354, F369–G389, L409–V429, and N452–F472.

This sequence belongs to the CPA3 antiporters (TC 2.A.63) subunit D family. May form a heterooligomeric complex that consists of seven subunits: mnhA2, mnhB2, mnhC2, mnhD2, mnhE2, mnhF2 and mnhG2.

It is found in the cell membrane. The protein is Putative antiporter subunit mnhD2 (mnhD2) of Staphylococcus saprophyticus subsp. saprophyticus (strain ATCC 15305 / DSM 20229 / NCIMB 8711 / NCTC 7292 / S-41).